Reading from the N-terminus, the 769-residue chain is Bifunctional glycosyltransferase pgtA (769 aa).

Positions 25–210 are N-acetylgalactosamine 3-beta-galactosyltransferase; it reads YQGINNLIIS…SVIFKRSIFT (186 aa). The span at 410–441 shows a compositional bias: low complexity; it reads NNINNNNNNNNNNNNNNNNNNNNNNNNNNNNN. The tract at residues 410 to 442 is disordered; it reads NNINNNNNNNNNNNNNNNNNNNNNNNNNNNNNS. The interval 442 to 769 is alpha-1,2-fucosyltransferase; that stretch reads SILNFISGIN…SVHIGELFIS (328 aa).

Belongs to the glycosyltransferase 2 family.

It catalyses the reaction an N-acetyl-beta-D-glucosaminyl derivative + UDP-alpha-D-galactose = a beta-D-galactosyl-(1-&gt;3)-N-acetyl-beta-D-glucosaminyl derivative + UDP + H(+). The enzyme catalyses a beta-D-galactosyl-(1-&gt;3)-N-acetyl-beta-D-glucosaminyl derivative + GDP-beta-L-fucose = an alpha-L-Fuc-(1-&gt;2)-beta-D-Gal-(1-&gt;3)-beta-D-GlcNAc derivative + GDP + H(+). Functionally, bifunctional protein composed of 2 glycosyltransferase domains involved in glycosylating skp1. The N-terminal part catalyzes the transfer of a galactose residue to GlcNAc-skp1 in a beta 1-3 linkage. The C-terminal part catalyzes the transfer of a fucose residue to Gal-GlcNAc-skp1 in an alpha 1-2 linkage. The protein is Bifunctional glycosyltransferase pgtA (pgtA) of Dictyostelium discoideum (Social amoeba).